The chain runs to 754 residues: Cytosolic neutral trehalase (754 aa).

Residues 1 to 10 are compositionally biased toward polar residues; the sequence is MDGKVNNNPP. 2 disordered regions span residues 1-47 and 54-73; these read MDGK…LSKN and TFSV…YTSP. Positions 117, 119, 121, 123, and 128 each coordinate Ca(2+). Substrate contacts are provided by residues R305, 312-313, N349, 358-360, E427, R476, and G479; these read WD and RSQ. Catalysis depends on proton donor/acceptor residues D481 and E676.

It belongs to the glycosyl hydrolase 37 family. It depends on Ca(2+) as a cofactor.

The protein resides in the cytoplasm. The catalysed reaction is alpha,alpha-trehalose + H2O = alpha-D-glucose + beta-D-glucose. Its pathway is carbohydrate degradation. Functionally, hydrolyzes intracellular trehalose to glucose. The disaccharide trehalose serves as a storage molecule for energy and carbohydrates that is mobilized during nutrient stress. This Kluyveromyces lactis (strain ATCC 8585 / CBS 2359 / DSM 70799 / NBRC 1267 / NRRL Y-1140 / WM37) (Yeast) protein is Cytosolic neutral trehalase.